The primary structure comprises 969 residues: Surface protein P113 (969 aa).

The signal sequence occupies residues 1 to 22 (MKIPFFILHILLLQFLLCLIRC). Asn207 is a glycosylation site (N-linked (GlcNAc...) asparagine). The tract at residues 223 to 328 (IGDESTDSSS…TDTLVNNKEN (106 aa)) is disordered. The span at 229–241 (DSSSMEIQDSTSN) shows a compositional bias: polar residues. Residue Asn268 is glycosylated (N-linked (GlcNAc...) asparagine). Basic and acidic residues predominate over residues 300-311 (KNEDNKDLEHGS). The segment covering 312–325 (SNDVNNNTDTLVNN) has biased composition (low complexity). 4 N-linked (GlcNAc...) asparagine glycosylation sites follow: Asn317, Asn360, Asn661, and Asn697. Over residues 688 to 705 (SSNFNIFDSNNTDQNNEQ) the composition is skewed to polar residues. The tract at residues 688–947 (SSNFNIFDSN…NETNKTDNGS (260 aa)) is disordered. Low complexity predominate over residues 713–727 (QLLNNNNDDVLSESN). The span at 728–749 (NENKEKTSDDATHKETQEKSDQ) shows a compositional bias: basic and acidic residues. Asn779 is a glycosylation site (N-linked (GlcNAc...) asparagine). The segment covering 798–811 (EGTEELQQNDEDAE) has biased composition (acidic residues). Residues 812-822 (SLTKENSKSEE) show a composition bias toward basic and acidic residues. The span at 823-841 (QENEDSTDAEAIDKEEVET) shows a compositional bias: acidic residues. Positions 842–854 (EEKGKDEQKKDEQ) are enriched in basic and acidic residues. Residues 855–864 (KEQDEEEDGE) show a composition bias toward acidic residues. A glycan (N-linked (GlcNAc...) asparagine) is linked at Asn876. The span at 883–896 (EENKNEVKGEEHLQ) shows a compositional bias: basic and acidic residues. Over residues 897–907 (GSEQSIEASES) the composition is skewed to low complexity. Positions 908–917 (SQKDETKETE) are enriched in basic and acidic residues. The segment covering 918–936 (DKEEYVNANDDESSEEDTT) has biased composition (acidic residues). Polar residues predominate over residues 937-947 (PNETNKTDNGS). Asn938, Asn941, and Asn945 each carry an N-linked (GlcNAc...) asparagine glycan. Asn945 carries GPI-anchor amidated asparagine lipidation. The propeptide at 946–969 (GSSFFFAMSNALLVILLLLFIEFL) is removed in mature form.

As to quaternary structure, forms a complex composed of RH5, P113 and human BSG/basigin; the complex bridges the merozoite and host erythrocyte membranes. Within the complex, interacts with RH5 (via N-terminus); the interaction tethers RH5 to the merozoite membrane.

The protein resides in the cell membrane. Its function is as follows. Membrane receptor which tethers secreted RH5 to the merozoite membrane during merozoite invasion of host erythocytes. The protein is Surface protein P113 of Plasmodium falciparum (isolate 3D7).